We begin with the raw amino-acid sequence, 718 residues long: Nucleolar protein 11 (718 aa).

Lysine 346 is subject to N6-methyllysine.

As to quaternary structure, interacts with UTP4. Interacts with FBL/fibrillarin in a transcription-dependent manner. May associate with the proposed t-UTP subcomplex of the SSU processome containing at least UTP4, WDR43, HEATR1, UTP15, WDR75.

It is found in the nucleus. Its subcellular location is the nucleolus. Ribosome biogenesis factor. May be required for both optimal rDNA transcription and small subunit (SSU) pre-rRNA processing at sites A', A0, 1 and 2b. This Pongo abelii (Sumatran orangutan) protein is Nucleolar protein 11 (NOL11).